The chain runs to 1135 residues: Envelopment polyprotein (1135 aa).

The first 35 residues, 1-35 (MRILKLLELVVKVSLFTIALSSVLLAFLIFRATDA), serve as a signal peptide directing secretion. The Lumenal segment spans residues 36-314 (KVEIIRGDHP…KYSKSIYKQT (279 aa)). A Cell attachment site motif is present at residues 41 to 43 (RGD). 2 disulfide bridges follow: cysteine 114-cysteine 145 and cysteine 122-cysteine 156. An N-linked (GlcNAc...) asparagine; by host glycan is attached at asparagine 116. The non-covalent dimerization stretch occupies residues 177-195 (LDKKRHFSVGGKFFISESL). Residue asparagine 210 is glycosylated (N-linked (GlcNAc...) asparagine; by host). Cysteine 224 and cysteine 285 form a disulfide bridge. The chain crosses the membrane as a helical span at residues 315-366 (ACINFSWIRLILIALLIYFPIRWLVNKTTKPLFLWYDLMGLITYPVLLLINC). Over 367–484 (LWKYFPLKCS…VPGCPFLVTS (118 aa)) the chain is Cytoplasmic. Positions 437-484 (LSLSLLKFVTEILIGLVILSQMPMSMAQTTQCLSGCFYVPGCPFLVTS) are signal for signal peptide peptidase. Residues 485–1067 (KFEKCSEKDQ…YFGSFFDTIR (583 aa)) lie on the Lumenal side of the membrane. Residues asparagine 605 and asparagine 980 are each glycosylated (N-linked (GlcNAc...) asparagine; by host). A helical membrane pass occupies residues 1068 to 1088 (VVLLIAFIFLVTYFCSILTSI). Residues 1089–1135 (CKGYVKNESYKSRSKIEDDDEPEIKAPMLMKDTMTRRRPPMDFSHLV) lie on the Cytoplasmic side of the membrane.

The protein belongs to the tospovirus envelope glycoprotein family. As to quaternary structure, homodimer; disulfide-linked. Heterodimer with Glycoprotein C. Interacts with nucleoprotein. In terms of assembly, heterodimer with Glycoprotein N. Interacts with nucleoprotein. Post-translationally, specific enzymatic cleavages in vivo yield mature proteins including Glycoprotein N and Glycoprotein C. Glycosylated with O-linked glycans. Glycosylation is essential for proper subcellular location. In terms of processing, cleaved at acidic pH.

The protein localises to the virion membrane. Its subcellular location is the host Golgi apparatus membrane. It is found in the host endoplasmic reticulum membrane. In terms of biological role, forms the spikes present at the surface of the virion together with Glycoprotein C. They are able to attach the virion to a cell receptor and to promote fusion of membranes after endocytosis of the virion. Plays a role in virus binding and/or entry into the vector midgut. Its function is as follows. Forms the spikes present at the surface of the virion together with Glycoprotein N. They are able to attach the virion to a cell receptor and to promote fusion of membranes after endocytosis of the virion. Probable class II fusion protein. The sequence is that of Envelopment polyprotein (GP) from Tomato spotted wilt virus (strain Brazilian Br-01) (TSWV).